Here is a 1157-residue protein sequence, read N- to C-terminus: Cyclin-dependent kinase 12 (1157 aa).

Positions 15-540 are disordered; that stretch reads SDVSSEDFSD…RSPTSRDLKH (526 aa). The span at 18-32 shows a compositional bias: acidic residues; it reads SSEDFSDQEAGDLDA. Residues 55–76 show a composition bias toward basic and acidic residues; that stretch reads GRLDAKPDKEGYDNYRSRRAED. The span at 85 to 94 shows a compositional bias: polar residues; sequence SRQTSSSEAT. Residue threonine 106 is modified to Phosphothreonine. Over residues 134–162 the composition is skewed to basic residues; that stretch reads RQKRKKQKKEKHKHKSKKKSKKRKKKRAK. The span at 163 to 176 shows a compositional bias: low complexity; the sequence is SYSSIDSMSDNDIN. Position 184 is a phosphothreonine (threonine 184). Over residues 189-215 the composition is skewed to polar residues; the sequence is PSKSNERTVSAAPSSFTPHNLKESSSP. Serine 190 and serine 192 each carry phosphoserine. Position 217 is a phosphothreonine (threonine 217). A compositionally biased stretch (polar residues) spans 224–255; sequence PNTNSNYYGESSLETANSALGSNLQVTVTNKQ. The span at 256-281 shows a compositional bias: low complexity; it reads SISNRLRSPPPSSRSSGNGPRFGNSP. Phosphoserine is present on serine 280. Threonine 283 bears the Phosphothreonine mark. Phosphoserine is present on residues serine 291, serine 301, and serine 314. The segment covering 315–332 has biased composition (basic and acidic residues); sequence PHKEDVSAHHRSSHDHGY. Residue serine 353 is modified to Phosphoserine. Threonine 365 bears the Phosphothreonine mark. Positions 392–403 are enriched in basic and acidic residues; sequence GKYERYSRDRYS. Residues 408 to 422 show a composition bias toward low complexity; it reads RSPSVQHSRSRQSPS. Residues 444–468 show a composition bias toward polar residues; the sequence is TTVSSTPSHTTRTSKRASGTGTSGD. Low complexity predominate over residues 473–484; that stretch reads SPRTSSRYMESS. Phosphoserine occurs at positions 487 and 492. The span at 495–508 shows a compositional bias: basic residues; sequence HHYHHRRSPRMRQR. The span at 518 to 533 shows a compositional bias: low complexity; the sequence is PSSASSESSASRSRSP. Serine 553 is subject to Phosphoserine. Disordered regions lie at residues 574–661 and 675–782; these read ERQE…ADVP and PFSA…QRPV. A compositionally biased stretch (polar residues) spans 586–603; sequence GALTINDNSSSVDGNTPN. The segment covering 609–623 has biased composition (low complexity); it reads SAPGSGTPAAASTTS. Composition is skewed to polar residues over residues 644–656 and 721–731; these read NKQNDSVVSNPAS and VTSSGSANKSV. Residues serine 730, serine 743, serine 747, and serine 755 each carry the phosphoserine modification. The segment covering 746-760 has biased composition (acidic residues); the sequence is LSGDDDVIDSPEDFD. In terms of domain architecture, Protein kinase spans 804–1098; sequence FEMIAQIGEG…AEDALRSPWL (295 aa). ATP is bound by residues 810–818, lysine 833, and 891–896; these read IGEGTYGQV and EYMDHD. The Proton acceptor role is filled by aspartate 936. Histidine 1118 contributes to the ATP binding site.

Belongs to the protein kinase superfamily. CMGC Ser/Thr protein kinase family. CDC2/CDKX subfamily. In terms of assembly, interacts with cyclin CycK.

Its subcellular location is the nucleus. It is found in the chromosome. It catalyses the reaction [DNA-directed RNA polymerase] + ATP = phospho-[DNA-directed RNA polymerase] + ADP + H(+). It carries out the reaction L-seryl-[protein] + ATP = O-phospho-L-seryl-[protein] + ADP + H(+). The enzyme catalyses L-threonyl-[protein] + ATP = O-phospho-L-threonyl-[protein] + ADP + H(+). Its function is as follows. Cyclin-dependent kinase which displays CTD kinase activity: hyperphosphorylates the C-terminal heptapeptide repeat domain (CTD) of the largest RNA polymerase II subunit, thereby acting as a key regulator of transcription elongation. This is Cyclin-dependent kinase 12 (Cdk12) from Drosophila melanogaster (Fruit fly).